The chain runs to 896 residues: MILLAVLFLCFFSSYSASVKGHTTGLSLNNERLYKLTYSTEVFLDGGKGKLQDSVGYRISSDVDVVLLWRNPDGDDDQLIQVTITAVNVENAGQQRGEKSIFKGKSTPKIVGKDNLEALRRPMLLHLVRGKVKEFYSYENEPVGIENLKRGLASLFQMQLTSGTTNEVDISGDCKVTYQAQQDKVVKIKALDTCKIERSGFTTANQVLGVTSKATSVTTYKIEDSFVTAVVAEETRAFALNFLQTVAGKIVSKQKLELKTTEAGPRMVPGKQVAGVIKAIDSKYKAIPIVGQVLQSVCKGCPSLAEHWQSIRKHLEPENLSNAEAVQSFLAFIQHLRTSRREEILQILKAEKKEVLPQLVDAVTSAQTPASLEAILDFLDFKSDSSIILQERFLYACGFASHPDEELLQALLSKFKGSFASNDIRESVMIIIGALVRKLCQNEGCKLKAVVEAKKLILGGLEKPEKKEDTTMYLLALKNALLPEGIPLLLKYAEAGEGPVSHLATTVLQRYDASFITDEVKKTLNRIYHQNRKVHEKTVRTTAAAVILKNNPSYMDVKNILLSIGELPKEMNKYMLTIVQDILHFEMPASKMIRRVLKEMIVHNYDRFSKSGSSSAYTGYVERSPHAASTYSLDILYSGSGILRRSNLNIFQYIGKAELHGSQVVIEAQGLEGLIAATPDEGEENLDSYAGMSAILFDVQLRPVTFFNGYSDLMSKMLSASGDPVSVVKGLILLIDHSQDIQLQSGLKANMDIQGGLAIDISGSMEFSLWYRESKTRVKNRVAVVITSDITVDSSFVKAGLESRAETEAGLEFISTVQFSQYPFLVCMQMDKAEAPLRQFETKYERLSTGRGYVSRRRKESLVPGCELPLHQENSEMCNVVFPPQPESGNSGGGWF.

A signal peptide spans 1 to 21; sequence MILLAVLFLCFFSSYSASVKG. The 632-residue stretch at 28 to 659 folds into the Vitellogenin domain; sequence LNNERLYKLT…IFQYIGKAEL (632 aa). The cysteines at positions 174 and 194 are disulfide-linked.

As to quaternary structure, heterodimer; heterodimerizes with the protein disulfide isomerase (P4HB/PDI). Interacts with APOB. Interacts with PRAP1.

The protein resides in the endoplasmic reticulum. Its subcellular location is the golgi apparatus. The catalysed reaction is a 1,2-diacyl-sn-glycero-3-phosphocholine(in) = a 1,2-diacyl-sn-glycero-3-phosphocholine(out). It carries out the reaction a 1,2-diacyl-sn-glycero-3-phosphoethanolamine(in) = a 1,2-diacyl-sn-glycero-3-phosphoethanolamine(out). It catalyses the reaction a cholesterol ester(in) = a cholesterol ester(out). The enzyme catalyses a triacyl-sn-glycerol(in) = a triacyl-sn-glycerol(out). Its function is as follows. Catalyzes the transport of triglyceride, cholesteryl ester, and phospholipid between phospholipid surfaces. Required for the assembly and secretion of plasma lipoproteins that contain apolipoprotein B. May be involved in regulating cholesteryl ester biosynthesis in cells that produce lipoproteins. This is Microsomal triglyceride transfer protein large subunit (Mttp) from Rattus norvegicus (Rat).